The following is a 188-amino-acid chain: Elongation factor P (188 aa).

The protein belongs to the elongation factor P family.

Its subcellular location is the cytoplasm. The protein operates within protein biosynthesis; polypeptide chain elongation. Involved in peptide bond synthesis. Stimulates efficient translation and peptide-bond synthesis on native or reconstituted 70S ribosomes in vitro. Probably functions indirectly by altering the affinity of the ribosome for aminoacyl-tRNA, thus increasing their reactivity as acceptors for peptidyl transferase. The chain is Elongation factor P from Gluconacetobacter diazotrophicus (strain ATCC 49037 / DSM 5601 / CCUG 37298 / CIP 103539 / LMG 7603 / PAl5).